A 306-amino-acid polypeptide reads, in one-letter code: Serine/threonine-protein phosphatase 2A catalytic subunit A (306 aa).

Positions 54, 56, 82, and 114 each coordinate Mn(2+). The active-site Proton donor is His-115. 2 residues coordinate Mn(2+): His-164 and His-238. Position 306 is a leucine methyl ester (Leu-306).

It belongs to the PPP phosphatase family. PP-2A subfamily. In terms of assembly, PP2A consists of a trimeric holoenzyme, composed of a 37 kDa catalytic subunit (C subunit) and a 65 kDa constant regulatory subunit (A subunit), that associates with a variety of regulatory subunits (B subunit) such as phr2AB (B55) and psrA (B56 homolog). The trimer may partially dissociates into a core 'AC' dimer equally active compared to the trimer. Mn(2+) is required as a cofactor. Reversibly methyl esterified on Leu-306 by leucine carboxyl methyltransferase 1 (LCMT) and protein phosphatase methylesterase 1 (PPME1). Carboxyl methylation influences the affinity of the catalytic subunit for the different regulatory subunits, thereby modulating the PP2A holoenzyme's substrate specificity, enzyme activity and cellular localization.

It is found in the cytoplasm. It localises to the cytosol. The protein localises to the nucleus speckle. The catalysed reaction is O-phospho-L-seryl-[protein] + H2O = L-seryl-[protein] + phosphate. The enzyme catalyses O-phospho-L-threonyl-[protein] + H2O = L-threonyl-[protein] + phosphate. In terms of biological role, plays a role in activating the myosin contractile function. Dephosphorylates threonine at 'Thr-1823', 'Thr-1833' and 'Thr-2029' in the C-terminal tail region of myosin II heavy chain (mhcA). Drives the assembly of dephosphorylated myosin II filaments to allow myosin recruitment into the cytoskeleton. The sequence is that of Serine/threonine-protein phosphatase 2A catalytic subunit A (pho2a) from Dictyostelium discoideum (Social amoeba).